We begin with the raw amino-acid sequence, 303 residues long: Porphobilinogen deaminase (303 aa).

At C235 the chain carries S-(dipyrrolylmethanemethyl)cysteine.

Belongs to the HMBS family. Monomer. Dipyrromethane is required as a cofactor.

The catalysed reaction is 4 porphobilinogen + H2O = hydroxymethylbilane + 4 NH4(+). It participates in porphyrin-containing compound metabolism; protoporphyrin-IX biosynthesis; coproporphyrinogen-III from 5-aminolevulinate: step 2/4. Its function is as follows. Tetrapolymerization of the monopyrrole PBG into the hydroxymethylbilane pre-uroporphyrinogen in several discrete steps. The protein is Porphobilinogen deaminase of Campylobacter fetus subsp. fetus (strain 82-40).